Consider the following 327-residue polypeptide: FERM domain-containing protein 6 (327 aa).

The FERM domain maps to 16 to 320; sequence RRVCIFLPND…NSHRLYMNLQ (305 aa).

It is found in the cytoplasm. The protein resides in the cell membrane. This Rattus norvegicus (Rat) protein is FERM domain-containing protein 6 (Frmd6).